The sequence spans 336 residues: Protein-arginine kinase (336 aa).

The region spanning Ile-22–Ile-245 is the Phosphagen kinase C-terminal domain. ATP contacts are provided by residues Ser-25 to Arg-29, His-83, Arg-116, Arg-167 to Met-171, and Arg-198 to Glu-203.

The protein belongs to the ATP:guanido phosphotransferase family.

It carries out the reaction L-arginyl-[protein] + ATP = N(omega)-phospho-L-arginyl-[protein] + ADP + H(+). In terms of biological role, catalyzes the specific phosphorylation of arginine residues in proteins. In Staphylococcus saprophyticus subsp. saprophyticus (strain ATCC 15305 / DSM 20229 / NCIMB 8711 / NCTC 7292 / S-41), this protein is Protein-arginine kinase.